Here is a 555-residue protein sequence, read N- to C-terminus: Glucose-6-phosphate isomerase (555 aa).

Glutamate 355 serves as the catalytic Proton donor. Catalysis depends on residues histidine 386 and lysine 514.

This sequence belongs to the GPI family.

The protein resides in the cytoplasm. It catalyses the reaction alpha-D-glucose 6-phosphate = beta-D-fructose 6-phosphate. The protein operates within carbohydrate biosynthesis; gluconeogenesis. Its pathway is carbohydrate degradation; glycolysis; D-glyceraldehyde 3-phosphate and glycerone phosphate from D-glucose: step 2/4. Functionally, catalyzes the reversible isomerization of glucose-6-phosphate to fructose-6-phosphate. This Buchnera aphidicola subsp. Schizaphis graminum (strain Sg) protein is Glucose-6-phosphate isomerase.